We begin with the raw amino-acid sequence, 117 residues long: Large ribosomal subunit protein bL20 (117 aa).

Belongs to the bacterial ribosomal protein bL20 family.

Its function is as follows. Binds directly to 23S ribosomal RNA and is necessary for the in vitro assembly process of the 50S ribosomal subunit. It is not involved in the protein synthesizing functions of that subunit. The polypeptide is Large ribosomal subunit protein bL20 (Nitratidesulfovibrio vulgaris (strain DSM 19637 / Miyazaki F) (Desulfovibrio vulgaris)).